The chain runs to 106 residues: Large ribosomal subunit protein uL24 (106 aa).

It belongs to the universal ribosomal protein uL24 family. In terms of assembly, part of the 50S ribosomal subunit.

One of two assembly initiator proteins, it binds directly to the 5'-end of the 23S rRNA, where it nucleates assembly of the 50S subunit. In terms of biological role, one of the proteins that surrounds the polypeptide exit tunnel on the outside of the subunit. The protein is Large ribosomal subunit protein uL24 of Desulforudis audaxviator (strain MP104C).